A 784-amino-acid chain; its full sequence is Kinesin-like protein Klp68D (784 aa).

The Kinesin motor domain maps to Cys-19–Ile-344. Gly-106–Thr-113 contacts ATP. Residues Asn-351–Val-385 adopt a coiled-coil conformation. Disordered regions lie at residues Arg-371–Arg-449, Lys-605–Leu-652, and Ile-742–Lys-784. Positions Thr-386–Lys-396 are enriched in basic residues. Residues Pro-416 to Ser-428 show a composition bias toward acidic residues. Residues Ala-426–Phe-582 adopt a coiled-coil conformation. Over residues Glu-429–Arg-449 the composition is skewed to basic and acidic residues. Positions Ser-622–Arg-634 are enriched in basic residues. Low complexity predominate over residues Lys-769–Ala-778.

Belongs to the TRAFAC class myosin-kinesin ATPase superfamily. Kinesin family. Kinesin II subfamily. Expressed primarily in the central nervous system and in a subset of the peripheral nervous system during embryogenesis.

It is found in the cytoplasm. Its subcellular location is the cytoskeleton. In terms of biological role, plus-end directed microtubule motor that may be used for anterograde axonal transport and could conceivably move cargos in fly neurons different than those moved by kinesin heavy chain or other plus-end directed motors. The protein is Kinesin-like protein Klp68D (Klp68D) of Drosophila melanogaster (Fruit fly).